A 282-amino-acid polypeptide reads, in one-letter code: Phosphatidylserine decarboxylase proenzyme (282 aa).

Catalysis depends on charge relay system; for autoendoproteolytic cleavage activity residues Asp88, His144, and Ser247. Residue Ser247 is the Schiff-base intermediate with substrate; via pyruvic acid; for decarboxylase activity of the active site. Position 247 is a pyruvic acid (Ser); by autocatalysis (Ser247).

The protein belongs to the phosphatidylserine decarboxylase family. PSD-B subfamily. Prokaryotic type I sub-subfamily. As to quaternary structure, heterodimer of a large membrane-associated beta subunit and a small pyruvoyl-containing alpha subunit. The cofactor is pyruvate. Post-translationally, is synthesized initially as an inactive proenzyme. Formation of the active enzyme involves a self-maturation process in which the active site pyruvoyl group is generated from an internal serine residue via an autocatalytic post-translational modification. Two non-identical subunits are generated from the proenzyme in this reaction, and the pyruvate is formed at the N-terminus of the alpha chain, which is derived from the carboxyl end of the proenzyme. The autoendoproteolytic cleavage occurs by a canonical serine protease mechanism, in which the side chain hydroxyl group of the serine supplies its oxygen atom to form the C-terminus of the beta chain, while the remainder of the serine residue undergoes an oxidative deamination to produce ammonia and the pyruvoyl prosthetic group on the alpha chain. During this reaction, the Ser that is part of the protease active site of the proenzyme becomes the pyruvoyl prosthetic group, which constitutes an essential element of the active site of the mature decarboxylase.

It is found in the cell membrane. The enzyme catalyses a 1,2-diacyl-sn-glycero-3-phospho-L-serine + H(+) = a 1,2-diacyl-sn-glycero-3-phosphoethanolamine + CO2. The protein operates within phospholipid metabolism; phosphatidylethanolamine biosynthesis; phosphatidylethanolamine from CDP-diacylglycerol: step 2/2. In terms of biological role, catalyzes the formation of phosphatidylethanolamine (PtdEtn) from phosphatidylserine (PtdSer). This Xanthomonas campestris pv. campestris (strain 8004) protein is Phosphatidylserine decarboxylase proenzyme.